We begin with the raw amino-acid sequence, 505 residues long: Deoxyguanosinetriphosphate triphosphohydrolase (505 aa).

The region spanning 66 to 273 (RLTHSMEVQQ…MEAADDISYC (208 aa)) is the HD domain.

The protein belongs to the dGTPase family. Type 1 subfamily. In terms of assembly, homotetramer. Mg(2+) is required as a cofactor.

The catalysed reaction is dGTP + H2O = 2'-deoxyguanosine + triphosphate + H(+). Its function is as follows. dGTPase preferentially hydrolyzes dGTP over the other canonical NTPs. The polypeptide is Deoxyguanosinetriphosphate triphosphohydrolase (Escherichia coli O81 (strain ED1a)).